The following is a 116-amino-acid chain: QSVEESGGRLVTPTPGLTLTCTVSGFSLSSYDMGWVRQAPGKGLEWIGIIYASGSTYYASWAKGRFTISKTSTTVDLKTSLPTEDTATYFCARQGTGLVHLAFVDVWGPGTLVTVS.

The residue at position 1 (Q1) is a Pyrrolidone carboxylic acid. Residues 1–107 (QSVEESGGRL…LVHLAFVDVW (107 aa)) form the Ig-like domain.

In Oryctolagus cuniculus (Rabbit), this protein is Ig heavy chain V-A1 region BS-5.